The following is a 137-amino-acid chain: Small ribosomal subunit protein uS12 (137 aa).

Disordered stretches follow at residues 1–21 (MPTINQLVRKPRKSKIEKSDS) and 33–57 (KVQTKMAAPQKRGVATRVGTMTPKK).

This sequence belongs to the universal ribosomal protein uS12 family. As to quaternary structure, part of the 30S ribosomal subunit. Contacts proteins S8 and S17. May interact with IF1 in the 30S initiation complex.

With S4 and S5 plays an important role in translational accuracy. Functionally, interacts with and stabilizes bases of the 16S rRNA that are involved in tRNA selection in the A site and with the mRNA backbone. Located at the interface of the 30S and 50S subunits, it traverses the body of the 30S subunit contacting proteins on the other side and probably holding the rRNA structure together. The combined cluster of proteins S8, S12 and S17 appears to hold together the shoulder and platform of the 30S subunit. In Streptococcus pyogenes serotype M1, this protein is Small ribosomal subunit protein uS12.